A 269-amino-acid chain; its full sequence is uncharacterized protein (269 aa).

Residues 5–73 (APKWRELADR…RGHGTVVRRK (69 aa)) enclose the HTH gntR-type domain. A DNA-binding region (H-T-H motif) is located at residues 33–52 (IRDLVEAGEGSKETVHRAYK).

The imp locus inhibits the extrachromosomal maintenance of the Streptomyces plasmid SLP1. This is an uncharacterized protein from Streptomyces coelicolor (strain ATCC BAA-471 / A3(2) / M145).